Consider the following 1070-residue polypeptide: DNA-directed RNA polymerase subunit beta (1070 aa).

Belongs to the RNA polymerase beta chain family. As to quaternary structure, in plastids the minimal PEP RNA polymerase catalytic core is composed of four subunits: alpha, beta, beta', and beta''. When a (nuclear-encoded) sigma factor is associated with the core the holoenzyme is formed, which can initiate transcription.

It is found in the plastid. The protein resides in the chloroplast. It catalyses the reaction RNA(n) + a ribonucleoside 5'-triphosphate = RNA(n+1) + diphosphate. Its function is as follows. DNA-dependent RNA polymerase catalyzes the transcription of DNA into RNA using the four ribonucleoside triphosphates as substrates. This is DNA-directed RNA polymerase subunit beta from Nicotiana sylvestris (Wood tobacco).